A 558-amino-acid chain; its full sequence is Alkaline/neutral invertase CINV2 (558 aa).

A phosphoserine mark is found at Ser-16, Ser-19, and Ser-50. Thr-79 carries the post-translational modification Phosphothreonine. A Phosphoserine modification is found at Ser-555.

The protein belongs to the glycosyl hydrolase 100 family.

Its subcellular location is the cytoplasm. It is found in the cytosol. The catalysed reaction is Hydrolysis of terminal non-reducing beta-D-fructofuranoside residues in beta-D-fructofuranosides.. Its function is as follows. Cytosolic invertase that may cleave sucrose into glucose and fructose, and that is involved in the regulation of root growth. May regulate sugar-mediated root development by controlling sucrose catabolism in root cells. The protein is Alkaline/neutral invertase CINV2 of Arabidopsis thaliana (Mouse-ear cress).